Consider the following 291-residue polypeptide: 4-hydroxy-tetrahydrodipicolinate synthase (291 aa).

Position 45 (threonine 45) interacts with pyruvate. Residue tyrosine 133 is the Proton donor/acceptor of the active site. Residue lysine 161 is the Schiff-base intermediate with substrate of the active site. Isoleucine 203 contacts pyruvate.

The protein belongs to the DapA family. Homotetramer; dimer of dimers.

Its subcellular location is the cytoplasm. The enzyme catalyses L-aspartate 4-semialdehyde + pyruvate = (2S,4S)-4-hydroxy-2,3,4,5-tetrahydrodipicolinate + H2O + H(+). It participates in amino-acid biosynthesis; L-lysine biosynthesis via DAP pathway; (S)-tetrahydrodipicolinate from L-aspartate: step 3/4. Functionally, catalyzes the condensation of (S)-aspartate-beta-semialdehyde [(S)-ASA] and pyruvate to 4-hydroxy-tetrahydrodipicolinate (HTPA). In Teredinibacter turnerae (strain ATCC 39867 / T7901), this protein is 4-hydroxy-tetrahydrodipicolinate synthase.